We begin with the raw amino-acid sequence, 457 residues long: Secreted effector kinase SteC (457 aa).

Lysine 256 provides a ligand contact to ATP.

It belongs to the protein kinase superfamily. Post-translationally, autophosphorylated.

The protein localises to the secreted. The protein resides in the host cytoplasm. In terms of biological role, effector proteins function to alter host cell physiology and promote bacterial survival in host tissues. This protein is a kinase, which is required for SPI-2 T3SS-dependent F-actin meshwork formation in infected host cells. The sequence is that of Secreted effector kinase SteC (steC) from Salmonella typhimurium (strain LT2 / SGSC1412 / ATCC 700720).